A 334-amino-acid polypeptide reads, in one-letter code: Flavonol synthase/flavanone 3-hydroxylase (334 aa).

Residues 196–295 (DLVYLMKINY…RMSWPVFLEP (100 aa)) enclose the Fe2OG dioxygenase domain. Fe cation-binding residues include His-220, Asp-222, and His-276.

The protein belongs to the iron/ascorbate-dependent oxidoreductase family. The cofactor is Fe cation. Requires L-ascorbate as cofactor.

Its subcellular location is the cytoplasm. It carries out the reaction a (2R,3R)-dihydroflavonol + 2-oxoglutarate + O2 = a flavonol + succinate + CO2 + H2O. The enzyme catalyses a (2S)-flavan-4-one + 2-oxoglutarate + O2 = a (2R,3R)-dihydroflavonol + succinate + CO2. Its pathway is secondary metabolite biosynthesis; flavonoid biosynthesis. Functionally, catalyzes the formation of flavonols from dihydroflavonols. It can act on dihydrokaempferol to produce kaempferol, on dihydroquercetin to produce quercitin and on dihydromyricetin to produce myricetin. This chain is Flavonol synthase/flavanone 3-hydroxylase (FLS), found in Eustoma exaltatum subsp. russellianum (Bluebells).